The chain runs to 690 residues: Molting protein mlt-10 (690 aa).

The first 18 residues, 1-18 (MRNLNLILFTALAAVTYA), serve as a signal peptide directing secretion. 2 N-linked (GlcNAc...) asparagine glycosylation sites follow: asparagine 42 and asparagine 204. Residues 219-285 (IKKLGEEAKR…MRKKEADEIR (67 aa)) are a coiled coil. N-linked (GlcNAc...) asparagine glycans are attached at residues asparagine 305 and asparagine 415. 5 helical membrane passes run 514–534 (PFIL…FIVL), 544–564 (LSPA…PLIL), 579–599 (FSPI…PGVF), 618–638 (VFTP…TPMV), and 643–663 (ILSP…FAVV).

Belongs to the mlt-10-like family. As to expression, expressed in the major body hypodermal syncytium (Hyp7), the dorsal and ventral ridges of the hypodermis, hypodermal cells in the head and tail, and the pharyngeal myoepithelium, but not the lateral seam cells.

The protein localises to the membrane. It is found in the secreted. Required for the efficient removal of larval cuticles during the molting cycle as well as the synthesis of new cuticles. This is Molting protein mlt-10 from Caenorhabditis elegans.